The primary structure comprises 426 residues: Serine--tRNA ligase (426 aa).

Residue 227–229 (TSE) coordinates L-serine. ATP contacts are provided by residues 258–260 (RKE) and Val274. Glu281 serves as a coordination point for L-serine. Position 345–348 (345–348 (ELTS)) interacts with ATP. Residue Thr380 coordinates L-serine.

Belongs to the class-II aminoacyl-tRNA synthetase family. Type-1 seryl-tRNA synthetase subfamily. Homodimer. The tRNA molecule binds across the dimer.

The protein resides in the cytoplasm. The enzyme catalyses tRNA(Ser) + L-serine + ATP = L-seryl-tRNA(Ser) + AMP + diphosphate + H(+). It carries out the reaction tRNA(Sec) + L-serine + ATP = L-seryl-tRNA(Sec) + AMP + diphosphate + H(+). Its pathway is aminoacyl-tRNA biosynthesis; selenocysteinyl-tRNA(Sec) biosynthesis; L-seryl-tRNA(Sec) from L-serine and tRNA(Sec): step 1/1. In terms of biological role, catalyzes the attachment of serine to tRNA(Ser). Is also able to aminoacylate tRNA(Sec) with serine, to form the misacylated tRNA L-seryl-tRNA(Sec), which will be further converted into selenocysteinyl-tRNA(Sec). The polypeptide is Serine--tRNA ligase (Clavibacter sepedonicus (Clavibacter michiganensis subsp. sepedonicus)).